Reading from the N-terminus, the 119-residue chain is Ribonuclease P protein component (119 aa).

Belongs to the RnpA family. Consists of a catalytic RNA component (M1 or rnpB) and a protein subunit.

The enzyme catalyses Endonucleolytic cleavage of RNA, removing 5'-extranucleotides from tRNA precursor.. Functionally, RNaseP catalyzes the removal of the 5'-leader sequence from pre-tRNA to produce the mature 5'-terminus. It can also cleave other RNA substrates such as 4.5S RNA. The protein component plays an auxiliary but essential role in vivo by binding to the 5'-leader sequence and broadening the substrate specificity of the ribozyme. The polypeptide is Ribonuclease P protein component (Pediococcus pentosaceus (strain ATCC 25745 / CCUG 21536 / LMG 10740 / 183-1w)).